We begin with the raw amino-acid sequence, 201 residues long: UPF0301 protein MMAR_0053 (201 aa).

The protein belongs to the UPF0301 (AlgH) family.

This chain is UPF0301 protein MMAR_0053, found in Mycobacterium marinum (strain ATCC BAA-535 / M).